Reading from the N-terminus, the 211-residue chain is Protein-L-isoaspartate O-methyltransferase (211 aa).

Ser62 is a catalytic residue.

The protein belongs to the methyltransferase superfamily. L-isoaspartyl/D-aspartyl protein methyltransferase family.

It localises to the cytoplasm. The enzyme catalyses [protein]-L-isoaspartate + S-adenosyl-L-methionine = [protein]-L-isoaspartate alpha-methyl ester + S-adenosyl-L-homocysteine. Catalyzes the methyl esterification of L-isoaspartyl residues in peptides and proteins that result from spontaneous decomposition of normal L-aspartyl and L-asparaginyl residues. It plays a role in the repair and/or degradation of damaged proteins. This is Protein-L-isoaspartate O-methyltransferase from Shewanella loihica (strain ATCC BAA-1088 / PV-4).